We begin with the raw amino-acid sequence, 224 residues long: Artemin (224 aa).

A signal peptide spans 1-39 (MELGLGEPTALSHCLRPRWQPALWPTLAALALLSSVTEA). A propeptide spanning residues 40–111 (SLDPMSRSPA…AALRGARAAR (72 aa)) is cleaved from the precursor. A disordered region spans residues 41–124 (LDPMSRSPAS…RSSRARATDA (84 aa)). The segment covering 80–95 (RPPPQSPQPAPPPPGP) has biased composition (pro residues). Over residues 96-116 (ALQSPPAALRGARAARAGTRS) the composition is skewed to low complexity. Disulfide bonds link Cys127/Cys192, Cys154/Cys220, and Cys158/Cys222. Asn206 carries an N-linked (GlcNAc...) asparagine glycan.

It belongs to the TGF-beta family. GDNF subfamily. Homodimer; disulfide-linked. Interacts with GFRA3 coreceptor and RET: forms a 2:2:2 ternary complex composed of ARTN ligand, GFRA3 and RET receptor. In terms of tissue distribution, cochlea. Expressed at higher level in sesorineural epithelium than in the modiolus region or substantia nigra.

The protein resides in the secreted. In terms of biological role, growth factor that supports the survival of sensory and sympathetic peripheral neurons in culture and also supports the survival of dopaminergic neurons of the ventral mid-brain. Acts by binding to its coreceptor, GFRA3, leading to autophosphorylation and activation of the RET receptor. Strong attractant of gut hematopoietic cells thus promoting the formation Peyer's patch-like structures, a major component of the gut-associated lymphoid tissue. The sequence is that of Artemin (Artn) from Rattus norvegicus (Rat).